We begin with the raw amino-acid sequence, 358 residues long: Probable branched-chain-amino-acid aminotransferase (358 aa).

Residue Lys-196 is modified to N6-(pyridoxal phosphate)lysine.

Belongs to the class-IV pyridoxal-phosphate-dependent aminotransferase family. Requires pyridoxal 5'-phosphate as cofactor.

The catalysed reaction is L-leucine + 2-oxoglutarate = 4-methyl-2-oxopentanoate + L-glutamate. It catalyses the reaction L-isoleucine + 2-oxoglutarate = (S)-3-methyl-2-oxopentanoate + L-glutamate. The enzyme catalyses L-valine + 2-oxoglutarate = 3-methyl-2-oxobutanoate + L-glutamate. It participates in amino-acid biosynthesis; L-isoleucine biosynthesis; L-isoleucine from 2-oxobutanoate: step 4/4. Its pathway is amino-acid biosynthesis; L-leucine biosynthesis; L-leucine from 3-methyl-2-oxobutanoate: step 4/4. It functions in the pathway amino-acid biosynthesis; L-valine biosynthesis; L-valine from pyruvate: step 4/4. Acts on leucine, isoleucine and valine. This chain is Probable branched-chain-amino-acid aminotransferase (ilvE), found in Staphylococcus aureus (strain MRSA252).